Here is a 242-residue protein sequence, read N- to C-terminus: 1-(5-phosphoribosyl)-5-[(5-phosphoribosylamino)methylideneamino] imidazole-4-carboxamide isomerase (242 aa).

Asp8 serves as the catalytic Proton acceptor. Asp129 serves as the catalytic Proton donor.

Belongs to the HisA/HisF family.

Its subcellular location is the cytoplasm. The catalysed reaction is 1-(5-phospho-beta-D-ribosyl)-5-[(5-phospho-beta-D-ribosylamino)methylideneamino]imidazole-4-carboxamide = 5-[(5-phospho-1-deoxy-D-ribulos-1-ylimino)methylamino]-1-(5-phospho-beta-D-ribosyl)imidazole-4-carboxamide. The protein operates within amino-acid biosynthesis; L-histidine biosynthesis; L-histidine from 5-phospho-alpha-D-ribose 1-diphosphate: step 4/9. This is 1-(5-phosphoribosyl)-5-[(5-phosphoribosylamino)methylideneamino] imidazole-4-carboxamide isomerase from Maridesulfovibrio salexigens (strain ATCC 14822 / DSM 2638 / NCIMB 8403 / VKM B-1763) (Desulfovibrio salexigens).